We begin with the raw amino-acid sequence, 439 residues long: GTPase Der (439 aa).

2 EngA-type G domains span residues 4–168 and 177–352; these read PIVA…KDDE and INIA…DNYT. GTP contacts are provided by residues 10–17, 57–61, 120–123, 183–190, 230–234, and 295–298; these read GRPNVGKS, DTGGI, NKID, GKPNVGKS, DTAGL, and NKWD. Residues 353 to 437 enclose the KH-like domain; it reads KRVKTGVLND…GIKLEFRERK (85 aa).

It belongs to the TRAFAC class TrmE-Era-EngA-EngB-Septin-like GTPase superfamily. EngA (Der) GTPase family. As to quaternary structure, associates with the 50S ribosomal subunit.

Functionally, GTPase that plays an essential role in the late steps of ribosome biogenesis. This Clostridium botulinum (strain Langeland / NCTC 10281 / Type F) protein is GTPase Der.